Here is a 537-residue protein sequence, read N- to C-terminus: uncharacterized protein (537 aa).

Disordered stretches follow at residues 1 to 33 (MEPG…ILAF), 71 to 98 (SSPP…RKRQ), 197 to 220 (SHNN…SEEK), and 516 to 537 (GRQR…EEQN). Position 72 is a phosphoserine (S72). Positions 88–98 (SRVDSEARKRQ) are enriched in basic and acidic residues. Polar residues predominate over residues 197–214 (SHNNMASSNTQSNTQLSE). A compositionally biased stretch (basic residues) spans 516–529 (GRQRSSRYKSHVHK).

It belongs to the NAD kinase family.

This is an uncharacterized protein from Schizosaccharomyces pombe (strain 972 / ATCC 24843) (Fission yeast).